Reading from the N-terminus, the 128-residue chain is DNA polymerase epsilon subunit 3 (128 aa).

Over residues 98–110 (EKKESKASKKDSN) the composition is skewed to basic and acidic residues. Positions 98–128 (EKKESKASKKDSNTAENANASATATAEEAPE) are disordered. The segment covering 111–128 (TAENANASATATAEEAPE) has biased composition (low complexity).

In terms of assembly, homodimer. Component of the DNA polymerase epsilon complex consisting of four subunits: the catalytic subunit PolE1/DNApol-epsilon255 and the accessory subunits PolE2/DNApol-epsilon58, Chrac-14/DNApolE3 and PolE4. Component of the chromatin accessibility complex (CHRAC), composed of Chrac-14, Chrac-16, Acf and Iswi. Forms an heterodimer with Chrac-16. The Chrac-14/Chrac-16 heterodimer interacts with Acf (via N-terminus). Interacts directly with Iswi and this interaction is further stabilized by association with Chrac-16. Component of the Ada2a-containing (ATAC) complex composed of at least Ada2a, Atac1, Hcf, Ada3, Gcn5, Mocs2B, Charac-14, Atac3, Atac2, NC2beta and wds. Interacts with cid.

The protein localises to the nucleus. Functionally, accessory component of the DNA polymerase epsilon complex. Participates in DNA repair and in chromosomal DNA replication. Histone-like protein which promotes nucleosome sliding of ATP-dependent nucleosome remodeling complexes. Part of the chromatin-accessibility complex (CHRAC) which uses energy/ATP to increase the general accessibility of DNA in chromatin. As a heterodimer with Chrac-16, binds DNA and facilitates nucleosome sliding by Acf. Has a role in DNA damage response by preventing cid mislocalization to chromatin. The chain is DNA polymerase epsilon subunit 3 from Drosophila melanogaster (Fruit fly).